The primary structure comprises 85 residues: Sec-independent protein translocase protein TatA (85 aa).

A helical membrane pass occupies residues 1–21; sequence MGIFDWKHWLIILIVVVLVFG. A disordered region spans residues 43–85; sequence VNTEEGENRPAEPQTGTSAGDTLNKTQTIEGQAQKVDTPVRKD. The span at 56-73 shows a compositional bias: polar residues; the sequence is QTGTSAGDTLNKTQTIEG.

The protein belongs to the TatA/E family. In terms of assembly, the Tat system comprises two distinct complexes: a TatABC complex, containing multiple copies of TatA, TatB and TatC subunits, and a separate TatA complex, containing only TatA subunits. Substrates initially bind to the TatABC complex, which probably triggers association of the separate TatA complex to form the active translocon.

It is found in the cell inner membrane. Part of the twin-arginine translocation (Tat) system that transports large folded proteins containing a characteristic twin-arginine motif in their signal peptide across membranes. TatA could form the protein-conducting channel of the Tat system. The sequence is that of Sec-independent protein translocase protein TatA from Azotobacter vinelandii (strain DJ / ATCC BAA-1303).